The sequence spans 205 residues: Probable inactive peroxygenase-like protein (205 aa).

Positions 79-88 match the Proline-knot motif; the sequence is PVQLFGYILP. Ser-183 is modified (phosphoserine).

The protein belongs to the caleosin family.

It localises to the lipid droplet. The protein is Probable inactive peroxygenase-like protein of Arabidopsis thaliana (Mouse-ear cress).